A 147-amino-acid polypeptide reads, in one-letter code: 2-amino-4-hydroxy-6-hydroxymethyldihydropteridine pyrophosphokinase (147 aa).

It belongs to the HPPK family.

It carries out the reaction 6-hydroxymethyl-7,8-dihydropterin + ATP = (7,8-dihydropterin-6-yl)methyl diphosphate + AMP + H(+). The protein operates within cofactor biosynthesis; tetrahydrofolate biosynthesis; 2-amino-4-hydroxy-6-hydroxymethyl-7,8-dihydropteridine diphosphate from 7,8-dihydroneopterin triphosphate: step 4/4. Its function is as follows. Catalyzes the transfer of pyrophosphate from adenosine triphosphate (ATP) to 6-hydroxymethyl-7,8-dihydropterin, an enzymatic step in folate biosynthesis pathway. This chain is 2-amino-4-hydroxy-6-hydroxymethyldihydropteridine pyrophosphokinase (folK), found in Porphyromonas gingivalis (strain ATCC 33277 / DSM 20709 / CIP 103683 / JCM 12257 / NCTC 11834 / 2561).